Reading from the N-terminus, the 471-residue chain is NADH-quinone oxidoreductase subunit N (471 aa).

Helical transmembrane passes span 6–26, 30–50, 70–90, 98–118, 123–143, 158–178, 198–218, 230–250, 264–284, 292–312, 320–340, 365–385, 400–420, and 438–458; these read FILP…LGVY, SSNI…ILIF, LSSF…SIST, IFLI…MVMI, LMVF…LASF, FVLS…VYGF, LTFG…AVPF, PTAV…TVFI, WQPI…IAAI, LIAY…STGS, IVYM…LLML, LSLL…GFFA, FLAI…LKII, and IWLK…FIFP.

The protein belongs to the complex I subunit 2 family. NDH-1 is composed of 14 different subunits. Subunits NuoA, H, J, K, L, M, N constitute the membrane sector of the complex.

It localises to the cell inner membrane. It carries out the reaction a quinone + NADH + 5 H(+)(in) = a quinol + NAD(+) + 4 H(+)(out). Its function is as follows. NDH-1 shuttles electrons from NADH, via FMN and iron-sulfur (Fe-S) centers, to quinones in the respiratory chain. The immediate electron acceptor for the enzyme in this species is believed to be ubiquinone. Couples the redox reaction to proton translocation (for every two electrons transferred, four hydrogen ions are translocated across the cytoplasmic membrane), and thus conserves the redox energy in a proton gradient. The sequence is that of NADH-quinone oxidoreductase subunit N from Pelagibacter ubique (strain HTCC1062).